Reading from the N-terminus, the 302-residue chain is Sulfate adenylyltransferase subunit 2 (302 aa).

The protein belongs to the PAPS reductase family. CysD subfamily. As to quaternary structure, heterodimer composed of CysD, the smaller subunit, and CysN.

It catalyses the reaction sulfate + ATP + H(+) = adenosine 5'-phosphosulfate + diphosphate. It functions in the pathway sulfur metabolism; hydrogen sulfide biosynthesis; sulfite from sulfate: step 1/3. In terms of biological role, with CysN forms the ATP sulfurylase (ATPS) that catalyzes the adenylation of sulfate producing adenosine 5'-phosphosulfate (APS) and diphosphate, the first enzymatic step in sulfur assimilation pathway. APS synthesis involves the formation of a high-energy phosphoric-sulfuric acid anhydride bond driven by GTP hydrolysis by CysN coupled to ATP hydrolysis by CysD. This Salmonella arizonae (strain ATCC BAA-731 / CDC346-86 / RSK2980) protein is Sulfate adenylyltransferase subunit 2.